A 219-amino-acid chain; its full sequence is Charged multivesicular body protein 5 (219 aa).

The span at 1 to 10 shows a compositional bias: basic residues; sequence MNRFFGKAKP. The segment at 1-21 is disordered; it reads MNRFFGKAKPKAPPPSLTDCI. Residues 26-179 adopt a coiled-coil conformation; the sequence is SRAESIDKKI…LGDELLADED (154 aa). A Phosphoserine modification is found at Ser86. Residues 188-219 are disordered; the sequence is SAPAIPEGVPTDTKNKDGVLVDEFGLPQIPAS.

It belongs to the SNF7 family. Probable peripherally associated component of the endosomal sorting required for transport complex III (ESCRT-III). ESCRT-III components are thought to multimerize to form a flat lattice on the perimeter membrane of the endosome. Several assembly forms of ESCRT-III may exist that interact and act sequentially. Interacts with VTA1. Interacts with CHMP2A. Interacts with VTA1; the interaction involves soluble CHMP5. Interacts with NOD2. Interacts with BROX. In terms of processing, ISGylated. Isgylation inhibits its interaction with VTA1.

The protein resides in the cytoplasm. It localises to the cytosol. It is found in the endosome membrane. Its subcellular location is the midbody. In terms of biological role, probable peripherally associated component of the endosomal sorting required for transport complex III (ESCRT-III) which is involved in multivesicular bodies (MVBs) formation and sorting of endosomal cargo proteins into MVBs. MVBs contain intraluminal vesicles (ILVs) that are generated by invagination and scission from the limiting membrane of the endosome and mostly are delivered to lysosomes enabling degradation of membrane proteins, such as stimulated growth factor receptors, lysosomal enzymes and lipids. The MVB pathway appears to require the sequential function of ESCRT-O, -I,-II and -III complexes. ESCRT-III proteins mostly dissociate from the invaginating membrane before the ILV is released. The ESCRT machinery also functions in topologically equivalent membrane fission events, such as the terminal stages of cytokinesis. ESCRT-III proteins are believed to mediate the necessary vesicle extrusion and/or membrane fission activities, possibly in conjunction with the AAA ATPase VPS4. In Mus musculus (Mouse), this protein is Charged multivesicular body protein 5 (Chmp5).